The primary structure comprises 258 residues: Acetylglutamate kinase (258 aa).

Substrate is bound by residues 44-45, R66, and N158; that span reads GG. ATP is bound by residues 181–186 and 209–211; these read DVSGIL and IIT.

This sequence belongs to the acetylglutamate kinase family. ArgB subfamily. In terms of assembly, homodimer.

It is found in the cytoplasm. It catalyses the reaction N-acetyl-L-glutamate + ATP = N-acetyl-L-glutamyl 5-phosphate + ADP. It participates in amino-acid biosynthesis; L-arginine biosynthesis; N(2)-acetyl-L-ornithine from L-glutamate: step 2/4. In terms of biological role, catalyzes the ATP-dependent phosphorylation of N-acetyl-L-glutamate. The chain is Acetylglutamate kinase from Salmonella arizonae (strain ATCC BAA-731 / CDC346-86 / RSK2980).